The primary structure comprises 858 residues: Leucine--tRNA ligase (858 aa).

The short motif at 42–52 (PYPSGRLHMGH) is the 'HIGH' region element. The 'KMSKS' region motif lies at 618–622 (KMSKS). Residue Lys-621 participates in ATP binding.

Belongs to the class-I aminoacyl-tRNA synthetase family.

The protein localises to the cytoplasm. It catalyses the reaction tRNA(Leu) + L-leucine + ATP = L-leucyl-tRNA(Leu) + AMP + diphosphate. The polypeptide is Leucine--tRNA ligase (Photobacterium profundum (strain SS9)).